A 269-amino-acid chain; its full sequence is Peptide deformylase 1B, chloroplastic (269 aa).

Residues methionine 1–phenylalanine 51 constitute a chloroplast transit peptide. Residues cysteine 168 and histidine 210 each contribute to the Fe cation site. Glutamate 211 is an active-site residue. Position 214 (histidine 214) interacts with Fe cation.

Belongs to the polypeptide deformylase family. In terms of assembly, homodimer. Fe(2+) serves as cofactor. As to expression, mainly expressed in mature leaves and sheaths.

It localises to the plastid. It is found in the chloroplast stroma. The protein resides in the mitochondrion. It catalyses the reaction N-terminal N-formyl-L-methionyl-[peptide] + H2O = N-terminal L-methionyl-[peptide] + formate. With respect to regulation, inhibited by actinonin. Removes the formyl group from the N-terminal Met of newly synthesized proteins. This is Peptide deformylase 1B, chloroplastic (PDF1B) from Oryza sativa subsp. japonica (Rice).